We begin with the raw amino-acid sequence, 337 residues long: Formamidase (337 aa).

In terms of domain architecture, CN hydrolase spans 14-257 (VVIGLVQLQL…DEIITAEVRP (244 aa)). The active-site Proton acceptor is Glu60. The active-site Proton donor is the Lys129. Catalysis depends on Cys162, which acts as the Nucleophile.

The protein belongs to the carbon-nitrogen hydrolase superfamily. Aliphatic amidase family.

It carries out the reaction formamide + H2O = formate + NH4(+). Is an aliphatic amidase with a restricted substrate specificity, as it only hydrolyzes formamide. The protein is Formamidase of Bradyrhizobium sp. (strain ORS 278).